Here is a 348-residue protein sequence, read N- to C-terminus: D-alanine--D-alanine ligase (348 aa).

Residues 132–334 enclose the ATP-grasp domain; sequence KQVLATVGVP…YSDLIEKLVM (203 aa). 162-217 lines the ATP pocket; it reads LETLSFPIFVKPANMGSSVGISKATDESSLRSAIDLALKYDSRILIEQGVTAREIE. Residues D288, E301, and N303 each coordinate Mg(2+).

This sequence belongs to the D-alanine--D-alanine ligase family. Mg(2+) serves as cofactor. It depends on Mn(2+) as a cofactor.

Its subcellular location is the cytoplasm. It carries out the reaction 2 D-alanine + ATP = D-alanyl-D-alanine + ADP + phosphate + H(+). It functions in the pathway cell wall biogenesis; peptidoglycan biosynthesis. Functionally, cell wall formation. This chain is D-alanine--D-alanine ligase, found in Streptococcus agalactiae serotype Ia (strain ATCC 27591 / A909 / CDC SS700).